Here is an 85-residue protein sequence, read N- to C-terminus: Large ribosomal subunit protein bL27 (85 aa).

The tract at residues 1 to 21 is disordered; that stretch reads MAHKKGQGSTQNNRDSAGRRL.

This sequence belongs to the bacterial ribosomal protein bL27 family.

The protein is Large ribosomal subunit protein bL27 of Nitratiruptor sp. (strain SB155-2).